We begin with the raw amino-acid sequence, 275 residues long: Autophagy protein 5 (275 aa).

Met-1 is subject to N-acetylmethionine. Lys-130 participates in a covalent cross-link: Glycyl lysine isopeptide (Lys-Gly) (interchain with G-Cter in ATG12).

It belongs to the ATG5 family. Forms a conjugate with ATG12. Part of the minor complex composed of 4 sets of ATG12-ATG5 and ATG16L1 (400 kDa); this complex interacts with ATG3 leading to disruption of ATG7 interaction and promotion of ATG8-like proteins lipidation. Forms an 800-kDa complex composed of ATG12-ATG5 and ATG16L2. The ATG12-ATG5 conjugate interacts with RAB33A; this interaction is bridged by ATG16L1 and promotes ATG12-ATG5-ATG16L1 complex recruitment to phagophores. Interacts with TECPR1; the interaction is direct and does not take place when ATG16L1 is associated with the ATG5-ATG12 conjugate. Interacts with DHX58/RIG-1, IFIH1/MDA5 and MAVS/IPS-1 in monomeric form as well as in ATG12-ATG5 conjugate form. The interaction with MAVS is further enhanced upon vesicular stomatitis virus (VSV) infection. Interacts with ATG3. Interacts with ATG7 and ATG10. Interacts with FADD. Interacts with Bassoon/BSN; this interaction is important for the regulation of presynaptic autophagy. Interacts with ATG16L2. Post-translationally, conjugated to ATG12; which is essential for autophagy, but is not required for association with isolation membrane. Acetylated by EP300.

It localises to the cytoplasm. The protein localises to the preautophagosomal structure membrane. Involved in autophagic vesicle formation. Conjugation with ATG12, through a ubiquitin-like conjugating system involving ATG7 as an E1-like activating enzyme and ATG10 as an E2-like conjugating enzyme, is essential for its function. The ATG12-ATG5 conjugate acts as an E3-like enzyme which is required for lipidation of ATG8 family proteins and their association to the vesicle membranes. Involved in mitochondrial quality control after oxidative damage, and in subsequent cellular longevity. Plays a critical role in multiple aspects of lymphocyte development and is essential for both B and T lymphocyte survival and proliferation. Required for optimal processing and presentation of antigens for MHC II. Involved in the maintenance of axon morphology and membrane structures, as well as in normal adipocyte differentiation. Promotes primary ciliogenesis through removal of OFD1 from centriolar satellites and degradation of IFT20 via the autophagic pathway. As part of the ATG8 conjugation system with ATG12 and ATG16L1, required for recruitment of LRRK2 to stressed lysosomes and induction of LRRK2 kinase activity in response to lysosomal stress. Its function is as follows. May play an important role in the apoptotic process, possibly within the modified cytoskeleton. Its expression is a relatively late event in the apoptotic process, occurring downstream of caspase activity. Plays a crucial role in IFN-gamma-induced autophagic cell death by interacting with FADD. The protein is Autophagy protein 5 of Pongo abelii (Sumatran orangutan).